The chain runs to 870 residues: UvrABC system protein B (870 aa).

Residues 20-410 (EGVDNNDRTQ…VFAEQVIRPT (391 aa)) enclose the Helicase ATP-binding domain. 33 to 40 (GVTGSGKT) provides a ligand contact to ATP. The Beta-hairpin signature appears at 86–109 (YYDYYQPEAYVPRTDTFIEKESSI). Positions 425–591 (QVDDVVGEIR…SVKSRISDIL (167 aa)) constitute a Helicase C-terminal domain. A UVR domain is found at 620-655 (KAHLDAMEKQMRDAAANLDFEKAARIRDEIKRLREM). Disordered regions lie at residues 671–698 (ESPVSGREKGKHNKGVAKHRTAEEQERF) and 741–870 (AKPS…RPGK). The span at 679-689 (KGKHNKGVAKH) shows a compositional bias: basic residues. 2 stretches are compositionally biased toward basic and acidic residues: residues 793–808 (NSLDEMTVRRTEKPVE) and 827–836 (TDVKDRDDSA). Residues 858 to 870 (EKRRPGKTGRPGK) are compositionally biased toward basic residues.

This sequence belongs to the UvrB family. Forms a heterotetramer with UvrA during the search for lesions. Interacts with UvrC in an incision complex.

Its subcellular location is the cytoplasm. Functionally, the UvrABC repair system catalyzes the recognition and processing of DNA lesions. A damage recognition complex composed of 2 UvrA and 2 UvrB subunits scans DNA for abnormalities. Upon binding of the UvrA(2)B(2) complex to a putative damaged site, the DNA wraps around one UvrB monomer. DNA wrap is dependent on ATP binding by UvrB and probably causes local melting of the DNA helix, facilitating insertion of UvrB beta-hairpin between the DNA strands. Then UvrB probes one DNA strand for the presence of a lesion. If a lesion is found the UvrA subunits dissociate and the UvrB-DNA preincision complex is formed. This complex is subsequently bound by UvrC and the second UvrB is released. If no lesion is found, the DNA wraps around the other UvrB subunit that will check the other stand for damage. This Mesorhizobium japonicum (strain LMG 29417 / CECT 9101 / MAFF 303099) (Mesorhizobium loti (strain MAFF 303099)) protein is UvrABC system protein B.